Consider the following 170-residue polypeptide: Translationally-controlled tumor protein homolog (170 aa).

Residues 1–170 (MIIYKDLLSG…FKDGLEIEKC (170 aa)) enclose the TCTP domain.

This sequence belongs to the TCTP family.

Its subcellular location is the cytoplasm. In terms of biological role, involved in calcium binding and microtubule stabilization. This chain is Translationally-controlled tumor protein homolog (tpt1), found in Scophthalmus maximus (Turbot).